Reading from the N-terminus, the 406-residue chain is L-carnitine CoA-transferase (406 aa).

The CoA site is built by K98 and R105. The Nucleophile role is filled by D170.

It belongs to the CoA-transferase III family. CaiB subfamily. As to quaternary structure, homodimer.

The protein resides in the cytoplasm. It catalyses the reaction crotonobetainyl-CoA + (R)-carnitine = crotonobetaine + (R)-carnitinyl-CoA. The enzyme catalyses 4-(trimethylamino)butanoyl-CoA + (R)-carnitine = (R)-carnitinyl-CoA + 4-(trimethylamino)butanoate. The protein operates within amine and polyamine metabolism; carnitine metabolism. In terms of biological role, catalyzes the reversible transfer of the CoA moiety from gamma-butyrobetainyl-CoA to L-carnitine to generate L-carnitinyl-CoA and gamma-butyrobetaine. Is also able to catalyze the reversible transfer of the CoA moiety from gamma-butyrobetainyl-CoA or L-carnitinyl-CoA to crotonobetaine to generate crotonobetainyl-CoA. The polypeptide is L-carnitine CoA-transferase (Proteus mirabilis (strain HI4320)).